A 219-amino-acid polypeptide reads, in one-letter code: uncharacterized protein (219 aa).

Positions 4-79 (GLRIIAENKI…YIIEIEEEES (76 aa)) constitute an ACT domain.

This is an uncharacterized protein from Archaeoglobus fulgidus (strain ATCC 49558 / DSM 4304 / JCM 9628 / NBRC 100126 / VC-16).